Here is a 208-residue protein sequence, read N- to C-terminus: MKIVEVKHPLIQHKLGLMRDHDISTKRFRELASEVSSLLTYEATADLETETVTIEGWCGPVEIEQIKGKKITVVPILRAGLGMMDGVLENIPSARISVVGVYRDEETLKPVPYFQKLASHIEERMALVVDPMLATGGSMIATIDLLKNSGCTSIKVLVLVAAPEGIKALEEAHPDVELYTASIDKHLNEHGYIVPGLGDAGDKIFGTK.

Residues Arg78, Arg103, and Asp130–Ser138 contribute to the 5-phospho-alpha-D-ribose 1-diphosphate site. Uracil-binding positions include Ile193 and Gly198–Ala200. Residue Asp199 coordinates 5-phospho-alpha-D-ribose 1-diphosphate.

Belongs to the UPRTase family. Mg(2+) serves as cofactor.

The enzyme catalyses UMP + diphosphate = 5-phospho-alpha-D-ribose 1-diphosphate + uracil. It functions in the pathway pyrimidine metabolism; UMP biosynthesis via salvage pathway; UMP from uracil: step 1/1. Its activity is regulated as follows. Allosterically activated by GTP. Catalyzes the conversion of uracil and 5-phospho-alpha-D-ribose 1-diphosphate (PRPP) to UMP and diphosphate. This chain is Uracil phosphoribosyltransferase, found in Proteus mirabilis (strain HI4320).